We begin with the raw amino-acid sequence, 423 residues long: Glutamate-1-semialdehyde 2,1-aminomutase (423 aa).

At Lys-266 the chain carries N6-(pyridoxal phosphate)lysine.

This sequence belongs to the class-III pyridoxal-phosphate-dependent aminotransferase family. HemL subfamily. As to quaternary structure, homodimer. Requires pyridoxal 5'-phosphate as cofactor.

Its subcellular location is the cytoplasm. The enzyme catalyses (S)-4-amino-5-oxopentanoate = 5-aminolevulinate. It functions in the pathway porphyrin-containing compound metabolism; protoporphyrin-IX biosynthesis; 5-aminolevulinate from L-glutamyl-tRNA(Glu): step 2/2. The chain is Glutamate-1-semialdehyde 2,1-aminomutase from Nitratidesulfovibrio vulgaris (strain DP4) (Desulfovibrio vulgaris).